The chain runs to 168 residues: Peptide deformylase (168 aa).

Fe cation contacts are provided by C92 and H134. E135 is a catalytic residue. H138 contacts Fe cation.

It belongs to the polypeptide deformylase family. The cofactor is Fe(2+).

It carries out the reaction N-terminal N-formyl-L-methionyl-[peptide] + H2O = N-terminal L-methionyl-[peptide] + formate. Removes the formyl group from the N-terminal Met of newly synthesized proteins. Requires at least a dipeptide for an efficient rate of reaction. N-terminal L-methionine is a prerequisite for activity but the enzyme has broad specificity at other positions. The protein is Peptide deformylase of Azotobacter vinelandii (strain DJ / ATCC BAA-1303).